The chain runs to 204 residues: Putative F-box protein L168 (204 aa).

The F-box domain maps to 1 to 46 (MNLCDLFDEIIIGIIDELSDRDKIKFMTTCSRFYYFIDKTKYFDIY). The interval 161–184 (NETNKITNNHTNKKINNNKKHQNN) is disordered. The segment covering 171-183 (TNKKINNNKKHQN) has biased composition (basic residues).

This is Putative F-box protein L168 from Acanthamoeba polyphaga (Amoeba).